The sequence spans 346 residues: 4-hydroxy-2-oxovalerate aldolase (346 aa).

Residues 8–260 (VTVHDMTLRD…ETGVDVFKIQ (253 aa)) enclose the Pyruvate carboxyltransferase domain. Residue 16–17 (RD) coordinates substrate. Residue Asp-17 coordinates Mn(2+). The active-site Proton acceptor is the His-20. Residues Ser-170 and His-199 each coordinate substrate. Mn(2+) is bound by residues His-199 and His-201. Tyr-290 provides a ligand contact to substrate.

This sequence belongs to the 4-hydroxy-2-oxovalerate aldolase family.

The enzyme catalyses (S)-4-hydroxy-2-oxopentanoate = acetaldehyde + pyruvate. This is 4-hydroxy-2-oxovalerate aldolase from Polaromonas naphthalenivorans (strain CJ2).